The following is a 457-amino-acid chain: Argininosuccinate lyase (457 aa).

Belongs to the lyase 1 family. Argininosuccinate lyase subfamily.

Its subcellular location is the cytoplasm. The enzyme catalyses 2-(N(omega)-L-arginino)succinate = fumarate + L-arginine. It participates in amino-acid biosynthesis; L-arginine biosynthesis; L-arginine from L-ornithine and carbamoyl phosphate: step 3/3. The chain is Argininosuccinate lyase from Sodalis glossinidius (strain morsitans).